The sequence spans 96 residues: MRKYEIMYIIRPGVEEEAQKALVERFAGVLTNNGAEIINTKEWGKRRLAYEINDLREGFYMILNVNANAEAINEFDRLAKINEDILRHIVVKEEEK.

Belongs to the bacterial ribosomal protein bS6 family.

In terms of biological role, binds together with bS18 to 16S ribosomal RNA. The polypeptide is Small ribosomal subunit protein bS6 (Bacillus thuringiensis subsp. konkukian (strain 97-27)).